The primary structure comprises 415 residues: Protrudin (415 aa).

The disordered stretch occupies residues 1–24 (MQTSDRDLSGPEASPSGMPEVLSE). Over 1 to 66 (MQTSDRDLSG…AGDGVRYLLR (66 aa)) the chain is Cytoplasmic. The tract at residues 1–92 (MQTSDRDLSG…LFLTLNEGAW (92 aa)) is sufficient for homooligomerization. A sufficient for localization to endoplasmic reticulum tubular network and for interactions with REEP1, REEP5, ATL1, ATL2, ATL3 and SPAST region spans residues 1–210 (MQTSDRDLSG…LYLLPLCWVL (210 aa)). The segment at 51–64 (LEPLKDAGDGVRYL) is necessary for interaction with RAB11A and function in neurite outgrowth. A helical membrane pass occupies residues 67-87 (WQMPLCSLLTCLGLNILFLTL). Residue asparagine 88 is a topological domain, lumenal. The chain crosses the membrane as a helical span at residues 89–109 (EGAWYSMGALMISVPALLGYL). At 110–192 (QEVCRGQLPE…NPVVSSQFYG (83 aa)) the chain is on the cytoplasmic side. Positions 193-213 (ALLGMVCMLYLLPLCWVLALL) form an intramembrane region, helical. The Cytoplasmic portion of the chain corresponds to 214-415 (NSTLFLGNGD…CASCNQTLSK (202 aa)). The segment at 254 to 290 (QGAGGRGLLDSSPAPTPTEDLTPGSVEEAEEAEPDEE) is disordered. Residues 275-365 (TPGSVEEAEE…GCAATFSVLK (91 aa)) form a necessary for interaction with KIF5A region. A compositionally biased stretch (acidic residues) spans 280–290 (EEAEEAEPDEE). The necessary for interaction with VAPA stretch occupies residues 290–296 (EFKDAIE). The segment at 348-414 (TNNFGNCAGC…VCASCNQTLS (67 aa)) adopts an FYVE-type zinc-finger fold. Zn(2+) is bound by residues cysteine 354, cysteine 357, cysteine 370, cysteine 373, cysteine 378, cysteine 381, cysteine 406, and cysteine 409.

As to quaternary structure, can form homooligomers (monomers, dimers and tetramers). Interacts with RAB11A (GDP-bound form); regulates RAB11A. Interacts with FKBP8; may negatively regulate ZFYVE27 phosphorylation. Isoform 1 interacts to a greater extent than isoform 2 with VAPB (via MSP domain). Isoform 1 interacts to a greater extent than isoform 2 with VAPA (via MSP domain). Interaction with VAPA may regulate ZFYVE27 retention in the endoplasmic reticulum and its function in cell projections formation. Interacts with ATL2, ATL3, SPAST and RTN3. Interacts with REEP1, REEP5 and ATL1. Interacts with RAB11B (GDP-bound form), SURF4, KIF5B and KIF5C. Isoform 1 and 2 interact with KIFA. Phosphorylated. Phosphorylation is induced by NGF through the MAPK/ERK pathway and modulates interaction with RAB11A. Astrocytes express both isoform 1 and isoform 2 and oligodendrocytes express only isoform 2 (at protein level). Isoform 1 is expressed specifically in the central nervous system and selectively in neuronal cells. Isoform 2 is expressed in cerebrum, cerebellum, spinal cord, heart, thymus, spleen, intestine and lung.

Its subcellular location is the recycling endosome membrane. It localises to the endoplasmic reticulum membrane. The protein resides in the cell projection. The protein localises to the growth cone membrane. Functionally, key regulator of RAB11-dependent vesicular trafficking during neurite extension through polarized membrane transport. Promotes axonal elongation and contributes to the establishment of neuronal cell polarity. Involved in nerve growth factor-induced neurite formation in VAPA-dependent manner. Contributes to both the formation and stabilization of the tubular ER network. Involved in ER morphogenesis by regulating the sheet-to-tubule balance and possibly the density of tubule interconnections. Acts as an adapter protein that facilitates the interaction of KIF5A with VAPA, VAPB, SURF4, RAB11A, RAB11B and RTN3 and the ZFYVE27-KIF5A complex contributes to the transport of these proteins in neurons. Can induce formation of neurite-like membrane protrusions in non-neuronal cells in a KIF5A/B-dependent manner. The protein is Protrudin (Zfyve27) of Mus musculus (Mouse).